The sequence spans 37 residues: Protease 2 large chain (37 aa).

Basic and acidic residues predominate over residues 1–14 (NDGNGRDSDPHDPG). Residues 1–37 (NDGNGRDSDPHDPGDWTTAGQCGLWQPARNSQHWTLV) form a disordered region. The segment covering 28–37 (ARNSQHWTLV) has biased composition (polar residues).

This sequence belongs to the peptidase S8 family. Heterodimer of a large and a small chain.

It localises to the secreted. The chain is Protease 2 large chain from Achromobacter lyticus.